Reading from the N-terminus, the 92-residue chain is MARMVMCKKLGKELPGLTFKPFPNELGQRIYDSVSQDAWKLWLEHFKMIMNEYRLSPADPRSQEILYQQAEQFFFSEGAQLPPDYRPPRSKG.

This sequence belongs to the Fe(2+)-trafficking protein family.

In terms of biological role, could be a mediator in iron transactions between iron acquisition and iron-requiring processes, such as synthesis and/or repair of Fe-S clusters in biosynthetic enzymes. The sequence is that of Probable Fe(2+)-trafficking protein from Anaeromyxobacter sp. (strain Fw109-5).